Reading from the N-terminus, the 146-residue chain is uncharacterized protein (146 aa).

Positions 87–121 are disordered; the sequence is SRSHHSTAKSAKSALSSDSGDGSDPDPEPETFPSA. A compositionally biased stretch (low complexity) spans 94–106; it reads AKSAKSALSSDSG.

This is an uncharacterized protein from Escherichia coli (strain K12).